Reading from the N-terminus, the 261-residue chain is Ribosome-inactivating protein PD-L1/PD-L2 (261 aa).

N-linked (GlcNAc...) asparagine; in PD-L1 and PD-L2 glycosylation is found at N10 and N43. Disulfide bonds link C34/C258 and C84/C105. The active site involves Y72. V73 is a binding site for substrate. Substrate is bound at residue S120. Catalysis depends on residues Y122, E175, and R178. R178 serves as a coordination point for substrate. N255 carries N-linked (GlcNAc...) asparagine; in PD-L1 glycosylation.

The protein belongs to the ribosome-inactivating protein family. Type 1 RIP subfamily. N-glycosylated. Loss of glycosylation does not affect DNA-cleaving ability. Loss of glycosylation does not affect protein synthesis inhibition, but increases adenine polynucleotide glycosidase activity likely as a consequence of the increased accessibility of substrates to the active site pocket in the absence of glycosylation. As to expression, expressed in leaves (at protein level).

The enzyme catalyses Endohydrolysis of the N-glycosidic bond at one specific adenosine on the 28S rRNA.. Functionally, inhibits protein synthesis. Has adenine polynucleotide glycosidase activity on herring sperm (hs)DNA and poly(A) substrates. Cleaves supercoiled pBR322 dsDNA. This chain is Ribosome-inactivating protein PD-L1/PD-L2, found in Phytolacca dioica (Bella sombra tree).